The sequence spans 111 residues: uncharacterized protein (111 aa).

A helical membrane pass occupies residues 20–39; that stretch reads PVDTTGLIFFAVFASSFVLY.

Its subcellular location is the membrane. This is an uncharacterized protein from Saccharomyces cerevisiae (strain ATCC 204508 / S288c) (Baker's yeast).